The sequence spans 367 residues: Probable butyrate kinase (367 aa).

This sequence belongs to the acetokinase family.

It localises to the cytoplasm. The catalysed reaction is butanoate + ATP = butanoyl phosphate + ADP. In Bacillus cereus (strain ATCC 14579 / DSM 31 / CCUG 7414 / JCM 2152 / NBRC 15305 / NCIMB 9373 / NCTC 2599 / NRRL B-3711), this protein is Probable butyrate kinase.